A 272-amino-acid chain; its full sequence is 2-dehydro-3-deoxyphosphooctonate aldolase (272 aa).

This sequence belongs to the KdsA family.

The protein localises to the cytoplasm. It catalyses the reaction D-arabinose 5-phosphate + phosphoenolpyruvate + H2O = 3-deoxy-alpha-D-manno-2-octulosonate-8-phosphate + phosphate. It functions in the pathway carbohydrate biosynthesis; 3-deoxy-D-manno-octulosonate biosynthesis; 3-deoxy-D-manno-octulosonate from D-ribulose 5-phosphate: step 2/3. Its pathway is bacterial outer membrane biogenesis; lipopolysaccharide biosynthesis. This is 2-dehydro-3-deoxyphosphooctonate aldolase from Trichlorobacter lovleyi (strain ATCC BAA-1151 / DSM 17278 / SZ) (Geobacter lovleyi).